A 555-amino-acid chain; its full sequence is MVAACRSVAGLLPRRRRCFPARAPLLRVALCLLCWTPAAVRAVPELGLWLETVNDKSGPLIFRKTMFNSTDIKLSVKSFHCSGPVKFTIVWHLKYHTCHNEHSNLEELFQKHKLSVDEDFCHYLKNDNCWTTKNENLDCNSDSQVFPSLNNKELINIRNVSNQERSMDVVARTQKDGFHIFIVSIKTENTDASWNLNVSLSMIGPHGYISASDWPLMIFYMVMCIVYILYGILWLTWSACYWKDILRIQFWIAAVIFLGMLEKAVFYSEYQNISNTGLSTQGLLIFAELISAIKRTLARLLVIIVSLGYGIVKPRLGTVMHRVIGLGLLYLIFAAVEGVMRVIGGSNHLAVVLDDIILAVIDSIFVWFIFISLAQTMKTLRLRKNTVKFSLYRHFKNTLIFAVLASIVFMGWTTKTFRIAKCQSDWMERWVDDAFWSFLFSLILIVIMFLWRPSANNQRYAFMPLIDDSDDEIEEFMVTSENLTEGIKLRASKSVSNGTAKPATSENFDEDLKWVEENIPSSFTDVALPVLVDSDEEIMTRSEMAEKMFSSEKIM.

Positions 1–42 (MVAACRSVAGLLPRRRRCFPARAPLLRVALCLLCWTPAAVRA) are cleaved as a signal peptide. The Lumenal segment spans residues 43–214 (VPELGLWLET…PHGYISASDW (172 aa)). Residues N68 and N197 are each glycosylated (N-linked (GlcNAc...) asparagine). The chain crosses the membrane as a helical span at residues 215–235 (PLMIFYMVMCIVYILYGILWL). The Cytoplasmic portion of the chain corresponds to 236–247 (TWSACYWKDILR). The chain crosses the membrane as a helical span at residues 248 to 268 (IQFWIAAVIFLGMLEKAVFYS). Residues 269–299 (EYQNISNTGLSTQGLLIFAELISAIKRTLAR) are Lumenal-facing. Residue N272 is glycosylated (N-linked (GlcNAc...) asparagine). Residues 300 to 320 (LLVIIVSLGYGIVKPRLGTVM) form a helical membrane-spanning segment. The Cytoplasmic segment spans residues 321 to 322 (HR). The chain crosses the membrane as a helical span at residues 323–343 (VIGLGLLYLIFAAVEGVMRVI). Topologically, residues 344-350 (GGSNHLA) are lumenal. Residues 351–371 (VVLDDIILAVIDSIFVWFIFI) traverse the membrane as a helical segment. Residues 372-396 (SLAQTMKTLRLRKNTVKFSLYRHFK) lie on the Cytoplasmic side of the membrane. The helical transmembrane segment at 397–417 (NTLIFAVLASIVFMGWTTKTF) threads the bilayer. The Lumenal portion of the chain corresponds to 418–429 (RIAKCQSDWMER). Residues 430–450 (WVDDAFWSFLFSLILIVIMFL) traverse the membrane as a helical segment. Over 451 to 555 (WRPSANNQRY…EKMFSSEKIM (105 aa)) the chain is Cytoplasmic. 4 positions are modified to phosphoserine: S469, S494, S496, and S534.

Belongs to the LU7TM family. TMEM87 subfamily.

Its subcellular location is the golgi apparatus membrane. In terms of biological role, may be involved in retrograde transport from endosomes to the trans-Golgi network (TGN). In Homo sapiens (Human), this protein is Transmembrane protein 87B.